Here is a 648-residue protein sequence, read N- to C-terminus: Beta-glucuronidase (648 aa).

Residues 1–22 form the signal peptide; that stretch reads MSLKWSACWVALGQLLCSCALA. N172 and N416 each carry an N-linked (GlcNAc...) asparagine glycan. The Proton donor role is filled by E447. An N-linked (GlcNAc...) asparagine glycan is attached at N627.

The protein belongs to the glycosyl hydrolase 2 family. In terms of assembly, homotetramer.

Its subcellular location is the lysosome. It is found in the endoplasmic reticulum. It carries out the reaction a beta-D-glucuronoside + H2O = D-glucuronate + an alcohol. With respect to regulation, inhibited by L-aspartic acid. Functionally, plays an important role in the degradation of dermatan and keratan sulfates. The polypeptide is Beta-glucuronidase (Gusb) (Mus musculus (Mouse)).